Consider the following 116-residue polypeptide: Ribonuclease P protein component (116 aa).

This sequence belongs to the RnpA family. In terms of assembly, consists of a catalytic RNA component (M1 or rnpB) and a protein subunit.

The catalysed reaction is Endonucleolytic cleavage of RNA, removing 5'-extranucleotides from tRNA precursor.. RNaseP catalyzes the removal of the 5'-leader sequence from pre-tRNA to produce the mature 5'-terminus. It can also cleave other RNA substrates such as 4.5S RNA. The protein component plays an auxiliary but essential role in vivo by binding to the 5'-leader sequence and broadening the substrate specificity of the ribozyme. The polypeptide is Ribonuclease P protein component (Geobacillus sp. (strain WCH70)).